The chain runs to 397 residues: Acetate kinase (397 aa).

Residue asparagine 8 coordinates Mg(2+). ATP is bound at residue lysine 15. Arginine 90 contacts substrate. Aspartate 147 serves as the catalytic Proton donor/acceptor. 207–211 (HLGAG) contacts ATP. Mg(2+) is bound at residue glutamate 382.

It belongs to the acetokinase family. Homodimer. Requires Mg(2+) as cofactor. It depends on Mn(2+) as a cofactor.

It localises to the cytoplasm. It catalyses the reaction acetate + ATP = acetyl phosphate + ADP. The protein operates within metabolic intermediate biosynthesis; acetyl-CoA biosynthesis; acetyl-CoA from acetate: step 1/2. Its function is as follows. Catalyzes the formation of acetyl phosphate from acetate and ATP. Can also catalyze the reverse reaction. The protein is Acetate kinase of Lactiplantibacillus plantarum (strain ATCC BAA-793 / NCIMB 8826 / WCFS1) (Lactobacillus plantarum).